The sequence spans 529 residues: Na(+)/H(+) antiporter NhaB (529 aa).

12 consecutive transmembrane segments (helical) span residues 13–33 (FLGK…IINP), 34–54 (IVFF…EFIF), 90–110 (LVAN…IYFM), 113–133 (LLLF…ILSL), 136–156 (CFAA…AVVI), 205–225 (LLMH…VGEP), 241–261 (FLIR…LTCF), 306–326 (GLIA…VGLI), 327–347 (GLSV…HSLG), 351–371 (EEAL…AVII), 451–471 (ATPN…APLI), and 479–499 (VIMA…GIVF).

This sequence belongs to the NhaB Na(+)/H(+) (TC 2.A.34) antiporter family.

It is found in the cell inner membrane. It carries out the reaction 2 Na(+)(in) + 3 H(+)(out) = 2 Na(+)(out) + 3 H(+)(in). Functionally, na(+)/H(+) antiporter that extrudes sodium in exchange for external protons. The protein is Na(+)/H(+) antiporter NhaB of Vibrio vulnificus (strain CMCP6).